The following is a 354-amino-acid chain: 4-hydroxy-3-methylbut-2-en-1-yl diphosphate synthase (flavodoxin) (354 aa).

Positions 263, 266, 298, and 305 each coordinate [4Fe-4S] cluster.

It belongs to the IspG family. Requires [4Fe-4S] cluster as cofactor.

The catalysed reaction is (2E)-4-hydroxy-3-methylbut-2-enyl diphosphate + oxidized [flavodoxin] + H2O + 2 H(+) = 2-C-methyl-D-erythritol 2,4-cyclic diphosphate + reduced [flavodoxin]. It participates in isoprenoid biosynthesis; isopentenyl diphosphate biosynthesis via DXP pathway; isopentenyl diphosphate from 1-deoxy-D-xylulose 5-phosphate: step 5/6. Its function is as follows. Converts 2C-methyl-D-erythritol 2,4-cyclodiphosphate (ME-2,4cPP) into 1-hydroxy-2-methyl-2-(E)-butenyl 4-diphosphate. This Fusobacterium nucleatum subsp. nucleatum (strain ATCC 25586 / DSM 15643 / BCRC 10681 / CIP 101130 / JCM 8532 / KCTC 2640 / LMG 13131 / VPI 4355) protein is 4-hydroxy-3-methylbut-2-en-1-yl diphosphate synthase (flavodoxin).